Reading from the N-terminus, the 76-residue chain is Acyl carrier protein (76 aa).

The Carrier domain maps to 1 to 76 (MSVEEKISKI…DAIAYIKNKQ (76 aa)). Serine 36 carries the O-(pantetheine 4'-phosphoryl)serine modification.

It belongs to the acyl carrier protein (ACP) family. In terms of processing, 4'-phosphopantetheine is transferred from CoA to a specific serine of apo-ACP by AcpS. This modification is essential for activity because fatty acids are bound in thioester linkage to the sulfhydryl of the prosthetic group.

It is found in the cytoplasm. It functions in the pathway lipid metabolism; fatty acid biosynthesis. In terms of biological role, carrier of the growing fatty acid chain in fatty acid biosynthesis. The sequence is that of Acyl carrier protein from Nitratidesulfovibrio vulgaris (strain DSM 19637 / Miyazaki F) (Desulfovibrio vulgaris).